We begin with the raw amino-acid sequence, 353 residues long: MLPSLQSLTKKVLAKQCVPVDQYHVLKCCGLWWYDGPITFYVYRHKMFIRSTCFSEGIELNTVLMKAAKENNHDLIRLFAEWGADINYGLICAHTEHTRNLCRELGAKDRLDRDYILKIFFDTTRNKTDSNIILCHEMFSNNPNLKNVDNLDLREEIMWELRGLMEITYMLDHDNSFSNMLTKYWYAIAVDYGLKKAIHYFYQRYTHLHHWRLMCALFYNNVFDLHELYVIERVRMDIDEMMHIACVQDYSYAAIYYCFIMGANINQAMLVSIQNYNLGNMFFCIDLGANAFEEGKALAEQKENYLIADALSLKHYNPVISLLSVIMDPEKINCMLKNYHSINMRVFLDYERR.

This sequence belongs to the asfivirus MGF 360 family. In terms of assembly, interacts with host TBK1 ad IRF7.

Its function is as follows. Plays a role in virus cell tropism, and may be required for efficient virus replication in macrophages. In addition, inhibits the phosphorylation of host TBK1 and IRF7 and thereby negatively regulates the host cGAS signaling pathway and antagonizes IFN-mediated antiviral activity. The protein is Protein MGF 360-11L of Ornithodoros (relapsing fever ticks).